A 186-amino-acid polypeptide reads, in one-letter code: Large ribosomal subunit protein uL22 (186 aa).

2 stretches are compositionally biased toward basic and acidic residues: residues 157 to 167 (VSKATDDEPTK) and 177 to 186 (RQKEKMLRSE). The segment at 157-186 (VSKATDDEPTKKKLSKKKLQRQKEKMLRSE) is disordered.

This sequence belongs to the universal ribosomal protein uL22 family.

The polypeptide is Large ribosomal subunit protein uL22 (RpL17) (Drosophila yakuba (Fruit fly)).